Consider the following 87-residue polypeptide: U3-theraphotoxin-Hhn1q (87 aa).

The N-terminal stretch at 1 to 24 (MVNMKASMFLTFAGLVLLFVVCYA) is a signal peptide. Residues 25–52 (SESEEKEFPKEMLSSIFAVDNDFKQEER) constitute a propeptide that is removed on maturation. 3 disulfides stabilise this stretch: Cys-54–Cys-67, Cys-61–Cys-72, and Cys-66–Cys-79.

This sequence belongs to the neurotoxin 10 (Hwtx-1) family. 51 (Hntx-8) subfamily. Hntx-8 sub-subfamily. As to expression, expressed by the venom gland.

It localises to the secreted. Functionally, ion channel inhibitor. This chain is U3-theraphotoxin-Hhn1q, found in Cyriopagopus hainanus (Chinese bird spider).